Consider the following 392-residue polypeptide: Early estrogen-induced gene 1 protein (392 aa).

The region spanning 2–145 (AFLMKKKKFK…ILKVTIGMFL (144 aa)) is the C2 NT-type domain. Residues 129–138 (NTRQDNSILK) form a required for interaction with TNFRSF11A/RANK region. The segment at 173–324 (LTCKGGGTSS…RKKDSVESHP (152 aa)) is disordered. Low complexity predominate over residues 183-194 (GGSSSTNSLTGS). The span at 228–255 (SRNSSYASQQSKLSGYSTEHSRSSSLSD) shows a compositional bias: polar residues. The span at 262–273 (TSTSSSASGGLS) shows a compositional bias: low complexity. 2 stretches are compositionally biased toward basic and acidic residues: residues 281–300 (GMER…EKPP) and 307–324 (HLSD…ESHP).

The protein belongs to the EEIG family. In terms of assembly, part of a complex composed of EEIG1, TNFRSF11A/RANK, PLCG2, GAB2, TEC and BTK; complex formation increases in the presence of TNFSF11/RANKL. Interacts with PRDM1/BLIMP1; following TNFSF11/RANKL stimulation in bone marrow-derived macrophages, the interaction promotes the binding of PRDM1/BLIMP1 to the gene promoter of IRF8. Interacts (via N-terminus) with TNFRSF11A/RANK (via cytoplasmic domain); when in the presence of TNFSF11/RANKL. Expressed during TNFSF11/RANKL-induced differentiation of bone marrow-derived macrophages to osteoclasts.

Its subcellular location is the nucleus. It is found in the cytoplasm. It localises to the membrane raft. Key component of TNFSF11/RANKL- and TNF-induced osteoclastogenesis pathways, thereby mediates bone resorption in pathological bone loss conditions. Required for TNFSF11/RANKL-induced osteoclastogenesis via its interaction with TNFRSF11A/RANK, thereby facilitates the downsteam transcription of NFATC1 and activation of PLCG2. Facilitates recruitment of the transcriptional repressor PRDM1/BLIMP1 to the promoter of the anti-osteoclastogenesis gene IRF8, thereby resulting in transcription of osteoclast differentiation factors. May play a role in estrogen action. This chain is Early estrogen-induced gene 1 protein (Eeig1), found in Mus musculus (Mouse).